The chain runs to 423 residues: Methionine aminopeptidase 2 (423 aa).

Basic and acidic residues predominate over residues 1 to 17 (MTDVIDAKPEEAKKVPP). The disordered stretch occupies residues 1–89 (MTDVIDAKPE…IQPYKDDNAY (89 aa)). Acidic residues predominate over residues 18–29 (EVEDEDSGDESA). Basic residues predominate over residues 41 to 54 (KKKKKKKKPKKKKK). Histidine 176 contributes to the substrate binding site. A divalent metal cation contacts are provided by aspartate 196, aspartate 207, and histidine 276. Residue histidine 284 coordinates substrate. Residues glutamate 309 and glutamate 404 each coordinate a divalent metal cation.

Belongs to the peptidase M24A family. Methionine aminopeptidase eukaryotic type 2 subfamily. The cofactor is Co(2+). Zn(2+) is required as a cofactor. Mn(2+) serves as cofactor. It depends on Fe(2+) as a cofactor.

Its subcellular location is the cytoplasm. It catalyses the reaction Release of N-terminal amino acids, preferentially methionine, from peptides and arylamides.. Functionally, cotranslationally removes the N-terminal methionine from nascent proteins. The N-terminal methionine is often cleaved when the second residue in the primary sequence is small and uncharged (Met-Ala-, Cys, Gly, Pro, Ser, Thr, or Val). This chain is Methionine aminopeptidase 2, found in Schizophyllum commune (strain H4-8 / FGSC 9210) (Split gill fungus).